Reading from the N-terminus, the 104-residue chain is Large ribosomal subunit protein bL21c (104 aa).

This sequence belongs to the bacterial ribosomal protein bL21 family. In terms of assembly, part of the 50S ribosomal subunit.

The protein resides in the plastid. It localises to the chloroplast. Its function is as follows. This protein binds to 23S rRNA. This chain is Large ribosomal subunit protein bL21c, found in Porphyra purpurea (Red seaweed).